Reading from the N-terminus, the 507-residue chain is Probable cytosol aminopeptidase (507 aa).

Mn(2+) contacts are provided by Lys275 and Asp280. Residue Lys287 is part of the active site. 3 residues coordinate Mn(2+): Asp298, Asp357, and Glu359. The active site involves Arg361.

Belongs to the peptidase M17 family. Mn(2+) is required as a cofactor.

The protein localises to the cytoplasm. It catalyses the reaction Release of an N-terminal amino acid, Xaa-|-Yaa-, in which Xaa is preferably Leu, but may be other amino acids including Pro although not Arg or Lys, and Yaa may be Pro. Amino acid amides and methyl esters are also readily hydrolyzed, but rates on arylamides are exceedingly low.. The catalysed reaction is Release of an N-terminal amino acid, preferentially leucine, but not glutamic or aspartic acids.. In terms of biological role, presumably involved in the processing and regular turnover of intracellular proteins. Catalyzes the removal of unsubstituted N-terminal amino acids from various peptides. The chain is Probable cytosol aminopeptidase from Acidobacterium capsulatum (strain ATCC 51196 / DSM 11244 / BCRC 80197 / JCM 7670 / NBRC 15755 / NCIMB 13165 / 161).